The following is a 430-amino-acid chain: Putative aspergillopepsin A-like aspartic endopeptidase MCYG_07979 (430 aa).

Residues Met1 to Ser17 form the signal peptide. The propeptide at Lys18 to Ala87 is activation peptide. The disordered stretch occupies residues Ser59–His105. The span at Ala87–Val98 shows a compositional bias: basic and acidic residues. Residues Phe109 to Ala427 enclose the Peptidase A1 domain. Asp125 is a catalytic residue. The N-linked (GlcNAc...) asparagine glycan is linked to Asn306. Asp314 is an active-site residue. Residue Asn352 is glycosylated (N-linked (GlcNAc...) asparagine).

This sequence belongs to the peptidase A1 family.

Its subcellular location is the secreted. The sequence is that of Putative aspergillopepsin A-like aspartic endopeptidase MCYG_07979 from Arthroderma otae (strain ATCC MYA-4605 / CBS 113480) (Microsporum canis).